Consider the following 842-residue polypeptide: Glycogen phosphorylase, muscle form (842 aa).

The residue at position 2 (Ser2) is an N-acetylserine. Ser15 carries the phosphoserine; by PHK; in form phosphorylase A modification. Phosphoserine is present on Ser26. The AMP site is built by Asp43 and Tyr76. A phosphotyrosine mark is found at Tyr204 and Tyr227. Arg310 to Cys319 serves as a coordination point for AMP. Position 430 is a phosphoserine (Ser430). Tyr473 is modified (phosphotyrosine). A Phosphoserine modification is found at Ser514. At Lys681 the chain carries N6-(pyridoxal phosphate)lysine. 2 positions are modified to phosphoserine: Ser747 and Ser748.

This sequence belongs to the glycogen phosphorylase family. As to quaternary structure, homodimer. Homotetramer; to form the enzymatically active phosphorylase A. Requires pyridoxal 5'-phosphate as cofactor. Post-translationally, phosphorylation of Ser-15 converts phosphorylase B (unphosphorylated) to phosphorylase A.

The catalysed reaction is [(1-&gt;4)-alpha-D-glucosyl](n) + phosphate = [(1-&gt;4)-alpha-D-glucosyl](n-1) + alpha-D-glucose 1-phosphate. Allosterically regulated through the non-covalent binding of metabolites, being activated by AMP and inhibited by ATP, ADP, and glucose-6-phosphate. The activity is also controlled by post-translational modifications including phosphorylation. Allosteric enzyme that catalyzes the rate-limiting step in glycogen catabolism, the phosphorolytic cleavage of glycogen to produce glucose-1-phosphate, and plays a central role in maintaining cellular and organismal glucose homeostasis. This chain is Glycogen phosphorylase, muscle form, found in Rattus norvegicus (Rat).